A 541-amino-acid polypeptide reads, in one-letter code: Chaperonin GroEL (541 aa).

ATP-binding positions include 29–32 (TLGP), 86–90 (DGTTT), Gly413, 476–478 (NAA), and Asp492.

It belongs to the chaperonin (HSP60) family. Forms a cylinder of 14 subunits composed of two heptameric rings stacked back-to-back. Interacts with the co-chaperonin GroES.

It localises to the cytoplasm. The catalysed reaction is ATP + H2O + a folded polypeptide = ADP + phosphate + an unfolded polypeptide.. In terms of biological role, together with its co-chaperonin GroES, plays an essential role in assisting protein folding. The GroEL-GroES system forms a nano-cage that allows encapsulation of the non-native substrate proteins and provides a physical environment optimized to promote and accelerate protein folding. This chain is Chaperonin GroEL, found in Streptococcus equi subsp. equi (strain 4047).